Consider the following 505-residue polypeptide: GMP synthase [glutamine-hydrolyzing] (505 aa).

Residues 3–190 enclose the Glutamine amidotransferase type-1 domain; it reads KVLVVNFGGQ…LRKIARISDV (188 aa). The Nucleophile role is filled by cysteine 80. Active-site residues include histidine 164 and glutamate 166. Positions 191–380 constitute a GMPS ATP-PPase domain; sequence WRPEDQITRI…LGLPEDVVYR (190 aa). Residue 218–224 coordinates ATP; sequence SGGVDST.

It carries out the reaction XMP + L-glutamine + ATP + H2O = GMP + L-glutamate + AMP + diphosphate + 2 H(+). It participates in purine metabolism; GMP biosynthesis; GMP from XMP (L-Gln route): step 1/1. In terms of biological role, catalyzes the synthesis of GMP from XMP. The protein is GMP synthase [glutamine-hydrolyzing] of Pyrobaculum aerophilum (strain ATCC 51768 / DSM 7523 / JCM 9630 / CIP 104966 / NBRC 100827 / IM2).